Here is a 133-residue protein sequence, read N- to C-terminus: Putative actin-depolymerizing factor 11 (133 aa).

An ADF-H domain is found at methionine 1–asparagine 133.

Belongs to the actin-binding proteins ADF family.

It localises to the cytoplasm. Its subcellular location is the cytoskeleton. Its function is as follows. Actin-depolymerizing protein. Severs actin filaments (F-actin) and binds to actin monomers. The chain is Putative actin-depolymerizing factor 11 (ADF11) from Arabidopsis thaliana (Mouse-ear cress).